A 363-amino-acid polypeptide reads, in one-letter code: Pyrimidine monooxygenase RutA (363 aa).

FMN contacts are provided by residues Ile49–Lys50, Asn115, Glu124, Arg140–Tyr141, and Ser190.

It belongs to the NtaA/SnaA/DszA monooxygenase family. RutA subfamily.

It carries out the reaction uracil + FMNH2 + NADH + O2 = (Z)-3-ureidoacrylate + FMN + NAD(+) + H2O + H(+). It catalyses the reaction thymine + FMNH2 + NADH + O2 = (Z)-2-methylureidoacrylate + FMN + NAD(+) + H2O + H(+). Its function is as follows. Catalyzes the pyrimidine ring opening between N-3 and C-4 by an unusual flavin hydroperoxide-catalyzed mechanism, adding oxygen atoms in the process to yield ureidoacrylate peracid, that immediately reacts with FMN forming ureidoacrylate and FMN-N(5)-oxide. The FMN-N(5)-oxide reacts spontaneously with NADH to produce FMN. Requires the flavin reductase RutF to regenerate FMN in vivo. This Escherichia coli O157:H7 (strain EC4115 / EHEC) protein is Pyrimidine monooxygenase RutA.